The sequence spans 442 residues: Putative ammonium transporter sll1017 (442 aa).

The next 13 membrane-spanning stretches (helical) occupy residues 5–25 (NFPL…VGVA), 44–64 (LFLL…AMLE), 81–101 (TFDV…LMYG), 104–124 (PVLG…LDNV), 133–153 (WLFQ…AVMG), 155–175 (MYFK…YPIS), 193–213 (FAGS…AVVV), 240–260 (GVFI…LAFV), 269–289 (MLIA…ALAF), 299–319 (PNLL…TAGC), 325–345 (WSAI…TKLL), 354–374 (VGAW…VGIF), and 386–406 (IVGS…LFYV).

This sequence belongs to the ammonia transporter channel (TC 1.A.11.2) family.

Its subcellular location is the cell membrane. The polypeptide is Putative ammonium transporter sll1017 (Synechocystis sp. (strain ATCC 27184 / PCC 6803 / Kazusa)).